The following is a 724-amino-acid chain: Aquaglyceroporin-4 (724 aa).

3 disordered regions span residues 1–167 (MADE…SIRR), 248–267 (INMA…NQAD), and 302–396 (AHGL…DLDG). The Cytoplasmic portion of the chain corresponds to 1–434 (MADEEIKPTS…VIRLRFREPL (434 aa)). Residues 87–96 (LTGQVPQDND) are compositionally biased toward polar residues. Residues 252–265 (QQQQQQQQQQPQNQ) show a composition bias toward low complexity. Composition is skewed to polar residues over residues 307-325 (SPTN…TAPS) and 360-370 (PSQTSQNSQNE). The helical transmembrane segment at 435 to 455 (AELLAVTCQLTLGFCADLVVV) threads the bilayer. Topologically, residues 456–472 (TSGKNASPAGNEATTDW) are extracellular. The chain crosses the membrane as a helical span at residues 473–493 (AWGLASMLGIYIAGGISGAHL). The short motif at 494-496 (NPA) is the NPA 1 element. Over 494 to 513 (NPAISIMLWIYRGFPLRKVP) the chain is Cytoplasmic. The chain crosses the membrane as a helical span at residues 514–534 (MYVLAQILGAFIAALISFGLY). The Extracellular portion of the chain corresponds to 535 to 567 (QTNIVEYGGTDLKTSDTMGAFITYPRYPWINAS). Residue Asn-565 is glycosylated (N-linked (GlcNAc...) asparagine). A helical membrane pass occupies residues 568–588 (TSFFTEFVGTAILAVAVLALG). Topologically, residues 589-595 (DDMNAPP) are cytoplasmic. Residues 596–616 (GAGMSAFILGLVITVLSMAFG) form a helical membrane-spanning segment. Over 617-647 (YNTGAALNPSRDLGPRLALAALGYGKDLFTD) the chain is Extracellular. The NPA 2 motif lies at 624 to 626 (NPS). Residues 648–668 (VYWIWGNWCAPILGAIFGAFL) form a helical membrane-spanning segment. Residues 669–724 (YDAAIFAGGESPVNYPRKRIKRAGHKWRKKWGVRLRKMKPAKKGEDEAYRRWKESQ) are Cytoplasmic-facing.

The protein belongs to the MIP/aquaporin (TC 1.A.8) family.

Its subcellular location is the membrane. It catalyses the reaction H2O(in) = H2O(out). It carries out the reaction glycerol(in) = glycerol(out). Its function is as follows. Water channel required to facilitate the transport of water across membranes. May play a role in the vegetative growth. This Botryotinia fuckeliana (strain B05.10) (Noble rot fungus) protein is Aquaglyceroporin-4.